The following is a 101-amino-acid chain: Nucleoid-associated protein Bind_0255 (101 aa).

It belongs to the YbaB/EbfC family. Homodimer.

The protein localises to the cytoplasm. It is found in the nucleoid. In terms of biological role, binds to DNA and alters its conformation. May be involved in regulation of gene expression, nucleoid organization and DNA protection. The protein is Nucleoid-associated protein Bind_0255 of Beijerinckia indica subsp. indica (strain ATCC 9039 / DSM 1715 / NCIMB 8712).